We begin with the raw amino-acid sequence, 1174 residues long: ATP-dependent DNA helicase SRS2 (1174 aa).

The region spanning 14 to 316 (QLNTQQRAAA…IILVENYRSS (303 aa)) is the UvrD-like helicase ATP-binding domain. 38–43 (GTGKTK) serves as a coordination point for ATP. The segment at 222 to 243 (LLMYTFRLLTRVRVLSNIKHVL) is leucine-zipper. Arg314 is an ATP binding site. The UvrD-like helicase C-terminal domain maps to 317–654 (QKILNTSEIL…TISTIHGAKG (338 aa)). The disordered stretch occupies residues 676-704 (DDKKDESEEDEEEDQENSKKDASPKKTRV). A Phosphoserine modification is found at Ser833. Disordered regions lie at residues 865 to 896 (SKIN…SPTK), 909 to 973 (NVPS…DKVT), and 994 to 1024 (ELHP…SNSD). Polar residues-rich tracts occupy residues 909-922 (NVPS…STGK) and 935-955 (TDIS…NKTS). Positions 956–973 (HMSDDLMRPSPTRKDKVT) are enriched in basic and acidic residues. The span at 1007–1023 (SLTSSEFSGFSSACSNS) shows a compositional bias: low complexity.

The protein belongs to the helicase family. UvrD subfamily.

The protein resides in the nucleus. It carries out the reaction Couples ATP hydrolysis with the unwinding of duplex DNA by translocating in the 3'-5' direction.. The enzyme catalyses ATP + H2O = ADP + phosphate + H(+). In terms of biological role, ATP-dependent DNA helicase involved in DNA repair at least for UV-induced lesions. The polarity of the helicase activity was determined to be 3' to 5'. This Saccharomyces cerevisiae (strain ATCC 204508 / S288c) (Baker's yeast) protein is ATP-dependent DNA helicase SRS2 (SRS2).